Here is a 78-residue protein sequence, read N- to C-terminus: Exodeoxyribonuclease 7 small subunit (78 aa).

It belongs to the XseB family. Heterooligomer composed of large and small subunits.

The protein resides in the cytoplasm. The catalysed reaction is Exonucleolytic cleavage in either 5'- to 3'- or 3'- to 5'-direction to yield nucleoside 5'-phosphates.. In terms of biological role, bidirectionally degrades single-stranded DNA into large acid-insoluble oligonucleotides, which are then degraded further into small acid-soluble oligonucleotides. This is Exodeoxyribonuclease 7 small subunit from Mycobacterium leprae (strain TN).